Here is a 390-residue protein sequence, read N- to C-terminus: MNALHFGAGNIGRGFIGPLLLKSGFNLTFVDNNQAIVDAINRHQKYDITVVGNNFSYITTVKKVKAIYINDPNIYFKIAKINVITISVGVHAINSLVVFFEKLIRYKIETNDFVFLTIIACENVFRCASKLKENIKILLPGIYHKYLDKNISFVDSVVDKIVCPNDKNNSDDINLSVKVEKFSEWIVDCTQFKHDRPNIIGMIYSNHLDAFFERKLFTLNTGHAIAAYLGLLIGYKNIYQAILDPLIFNIVYGAMKESGMVLIRKYNFFTDSEHKNYILKILSRFKNIYLTDSLKRVGRNPLQKLKKDDRLISPLIDTIKYNLPNANLMKGIAAALCYIDEKDIEAKKLRNMIINKGIKYVLSKISSLDSSLLIISEISIYFNIFMKVNI.

3–14 is a binding site for NAD(+); that stretch reads ALHFGAGNIGRG.

Belongs to the mannitol dehydrogenase family.

The enzyme catalyses D-mannitol 1-phosphate + NAD(+) = beta-D-fructose 6-phosphate + NADH + H(+). This Buchnera aphidicola subsp. Baizongia pistaciae (strain Bp) protein is Mannitol-1-phosphate 5-dehydrogenase.